Consider the following 385-residue polypeptide: tRNA-specific 2-thiouridylase MnmA (385 aa).

ATP contacts are provided by residues 27-34 and Leu-53; that span reads AMSGGVDS. Catalysis depends on Cys-121, which acts as the Nucleophile. Cys-121 and Cys-217 are disulfide-bonded. Residue Gly-145 participates in ATP binding. The interaction with tRNA stretch occupies residues 167 to 169; sequence KDQ. Cys-217 acts as the Cysteine persulfide intermediate in catalysis.

It belongs to the MnmA/TRMU family.

Its subcellular location is the cytoplasm. The catalysed reaction is S-sulfanyl-L-cysteinyl-[protein] + uridine(34) in tRNA + AH2 + ATP = 2-thiouridine(34) in tRNA + L-cysteinyl-[protein] + A + AMP + diphosphate + H(+). In terms of biological role, catalyzes the 2-thiolation of uridine at the wobble position (U34) of tRNA, leading to the formation of s(2)U34. The protein is tRNA-specific 2-thiouridylase MnmA of Sorangium cellulosum (strain So ce56) (Polyangium cellulosum (strain So ce56)).